Here is a 206-residue protein sequence, read N- to C-terminus: Ras-related protein Rab-18 (206 aa).

Met1 bears the N-acetylmethionine mark. GTP contacts are provided by Ser17, Gly20, Lys21, Ser22, Ser23, Asp34, Pro35, Thr40, Gly66, Lys123, and Asp125. Ser22 is a Mg(2+) binding site. Short sequence motifs (switch) lie at residues 31–45 (DTFD…GVDF) and 63–80 (DTAG…YYRG). Thr40 serves as a coordination point for Mg(2+). The residue at position 144 (Ser144) is a Phosphoserine. Residue Ala152 participates in GTP binding. Cys199 carries S-palmitoyl cysteine lipidation. A Cysteine methyl ester modification is found at Cys203. Cys203 carries S-geranylgeranyl cysteine lipidation. A propeptide spans 204–206 (SVL) (removed in mature form).

It belongs to the small GTPase superfamily. Rab family. As to quaternary structure, interacts (in GTP-bound form) with ZFYVE1. Interacts with ZW10 and this interaction is enhanced in the presence of ZFYVE1. Interacts with BSCL2. Mg(2+) is required as a cofactor.

The protein resides in the endoplasmic reticulum membrane. The protein localises to the golgi apparatus. It localises to the cis-Golgi network membrane. Its subcellular location is the lipid droplet. It is found in the apical cell membrane. The enzyme catalyses GTP + H2O = GDP + phosphate + H(+). Its activity is regulated as follows. Regulated by guanine nucleotide exchange factors (GEFs) which promote the exchange of bound GDP for free GTP. Regulated by GTPase activating proteins (GAPs) which increase the GTP hydrolysis activity at the ER membrane. Inhibited by GDP dissociation inhibitors (GDIs) which prevent Rab-GDP dissociation. Functionally, the small GTPases Rab are key regulators of intracellular membrane trafficking, from the formation of transport vesicles to their fusion with membranes. Rabs cycle between an inactive GDP-bound form and an active GTP-bound form that is able to recruit to membranes different sets of downstream effectors directly responsible for vesicle formation, movement, tethering and fusion. RAB18 is required for the localization of ZFYVE1 to lipid droplets and for its function in mediating the formation of endoplasmic reticulum-lipid droplets (ER-LD) contacts. Also required for maintaining endoplasmic reticulum structure. Plays a role in apical endocytosis/recycling. Plays a key role in eye and brain development and neurodegeneration. The sequence is that of Ras-related protein Rab-18 (RAB18) from Bos taurus (Bovine).